Here is a 303-residue protein sequence, read N- to C-terminus: N-acetyl-D-glucosamine kinase (303 aa).

ATP contacts are provided by residues 4-11 (GFDIGGTK) and 133-140 (GVGGGLVF). Zn(2+)-binding residues include histidine 157, cysteine 177, cysteine 179, and cysteine 184.

The protein belongs to the ROK (NagC/XylR) family. NagK subfamily.

The enzyme catalyses N-acetyl-D-glucosamine + ATP = N-acetyl-D-glucosamine 6-phosphate + ADP + H(+). The protein operates within cell wall biogenesis; peptidoglycan recycling. Catalyzes the phosphorylation of N-acetyl-D-glucosamine (GlcNAc) derived from cell-wall degradation, yielding GlcNAc-6-P. This chain is N-acetyl-D-glucosamine kinase, found in Shigella flexneri serotype 5b (strain 8401).